Here is a 273-residue protein sequence, read N- to C-terminus: Dermonecrotic toxin LhSicTox-alphaIA2avi (273 aa).

Residue histidine 5 is part of the active site. Residues glutamate 25 and aspartate 27 each contribute to the Mg(2+) site. Residue histidine 41 is the Nucleophile of the active site. Disulfide bonds link cysteine 45-cysteine 51 and cysteine 47-cysteine 190. Aspartate 85 lines the Mg(2+) pocket.

It belongs to the arthropod phospholipase D family. Class II subfamily. Mg(2+) serves as cofactor. As to expression, expressed by the venom gland.

The protein resides in the secreted. It carries out the reaction an N-(acyl)-sphingosylphosphocholine = an N-(acyl)-sphingosyl-1,3-cyclic phosphate + choline. It catalyses the reaction an N-(acyl)-sphingosylphosphoethanolamine = an N-(acyl)-sphingosyl-1,3-cyclic phosphate + ethanolamine. The catalysed reaction is a 1-acyl-sn-glycero-3-phosphocholine = a 1-acyl-sn-glycero-2,3-cyclic phosphate + choline. The enzyme catalyses a 1-acyl-sn-glycero-3-phosphoethanolamine = a 1-acyl-sn-glycero-2,3-cyclic phosphate + ethanolamine. Dermonecrotic toxins cleave the phosphodiester linkage between the phosphate and headgroup of certain phospholipids (sphingolipid and lysolipid substrates), forming an alcohol (often choline) and a cyclic phosphate. This toxin acts on sphingomyelin (SM). It may also act on ceramide phosphoethanolamine (CPE), lysophosphatidylcholine (LPC) and lysophosphatidylethanolamine (LPE), but not on lysophosphatidylserine (LPS), and lysophosphatidylglycerol (LPG). It acts by transphosphatidylation, releasing exclusively cyclic phosphate products as second products. Induces dermonecrosis, hemolysis, increased vascular permeability, edema, inflammatory response, and platelet aggregation. The chain is Dermonecrotic toxin LhSicTox-alphaIA2avi from Loxosceles hirsuta (Recluse spider).